The sequence spans 134 residues: Histone-like protein Rv3852 (134 aa).

Residues 1-10 (MPDPQDRPDS) show a composition bias toward basic and acidic residues. The segment at 1–68 (MPDPQDRPDS…PAEAPVSLQQ (68 aa)) is disordered. A compositionally biased stretch (basic residues) spans 23–48 (LPAKKAAKKAPARKTPAKKAPAKKTP). The chain crosses the membrane as a helical span at residues 111–128 (PVPLIVAVTLSLLALLLI).

As to quaternary structure, homodimer in solution. Is probably able to self-associate in higher oligomers along the DNA molecules. Interacts with the N-terminal region of Wag31.

The protein localises to the cell inner membrane. With respect to regulation, can interact directly in vitro with the compound agrimophol, a phloroglucinol from the A.pilosa plant, whose extracts have been used in traditional Chinese medicine to treat pulmonary infections. Interaction with agrimophol leads to disruption of Rv3852's DNA binding function. Binds DNA in vitro. It has been proposed that Rv3852 plays a role in nucleoid organization and may function as an anchorage to tether the DNA to the membrane. However, it was later shown that it has no influence on nucleoid shape or compaction. It plays no role in virulence and only a minor role in the control of transcription, and does not appear to function as a typical nucleoid-associated protein. Functionally, interacts with Wag31, an important cell shape and cell wall integrity determinant, and facilitates the localization of Wag31 to the cell poles and the cell wall, thus enabling nascent peptidoglycan synthesis. The sequence is that of Histone-like protein Rv3852 from Mycobacterium tuberculosis (strain ATCC 25618 / H37Rv).